Consider the following 120-residue polypeptide: NAD(P)H-quinone oxidoreductase subunit 3, chloroplastic (120 aa).

Helical transmembrane passes span 9–29, 64–84, and 88–108; these read IFWAFLIIASLIPILAFWISA, MFALVFVVFDVETVFLYPWAM, and VLGISVFIEAFIFVLILVVGL.

Belongs to the complex I subunit 3 family. NDH is composed of at least 16 different subunits, 5 of which are encoded in the nucleus.

It is found in the plastid. It localises to the chloroplast thylakoid membrane. The catalysed reaction is a plastoquinone + NADH + (n+1) H(+)(in) = a plastoquinol + NAD(+) + n H(+)(out). It carries out the reaction a plastoquinone + NADPH + (n+1) H(+)(in) = a plastoquinol + NADP(+) + n H(+)(out). Its function is as follows. NDH shuttles electrons from NAD(P)H:plastoquinone, via FMN and iron-sulfur (Fe-S) centers, to quinones in the photosynthetic chain and possibly in a chloroplast respiratory chain. The immediate electron acceptor for the enzyme in this species is believed to be plastoquinone. Couples the redox reaction to proton translocation, and thus conserves the redox energy in a proton gradient. The chain is NAD(P)H-quinone oxidoreductase subunit 3, chloroplastic from Oryza nivara (Indian wild rice).